Reading from the N-terminus, the 275-residue chain is Vitamin B12-binding protein (275 aa).

An N-terminal signal peptide occupies residues 1-19 (MMNKLCFALPLIFSDASFA). The region spanning 25–272 (RIISLAPHST…EVCEHFETVR (248 aa)) is the Fe/B12 periplasmic-binding domain. The cysteines at positions 185 and 265 are disulfide-linked.

This sequence belongs to the BtuF family. In terms of assembly, the complex is composed of two ATP-binding proteins (BtuD), two transmembrane proteins (BtuC) and a solute-binding protein (BtuF).

Its subcellular location is the periplasm. Part of the ABC transporter complex BtuCDF involved in vitamin B12 import. Binds vitamin B12 and delivers it to the periplasmic surface of BtuC. In Vibrio campbellii (strain ATCC BAA-1116), this protein is Vitamin B12-binding protein.